Consider the following 476-residue polypeptide: MSSLLPPLGAVLPELLLALSAVVLVLIGAIQGEKSANLVNGLAIAALVAAGVLVMLQPAVTIAGFNGSMLVDPFARFMKVVALLGAAVSLIMSVDWLNRAQQAKFEYAVLVVLASLGICILISAGDLIALYLGLELMSLSLYVVAAINRDSVRSTEAGLKYFVLGALSSGMLLYGASLIYGFTGTVNFAGIAKVATAPTTGLVFGIVFLFAGLCFKVSAVPFHMWTPDVYEGAPTPVTAFFATAPKVAAMAVFVRVAVEALPHVTHSWQQIVTFVSIASMALGAFAAIGQRNIKRLLAYSSIGHMGFALVGLAAGTEQGVTGVLLYMAIYVVMTLGSFTCVLAMRRDGRSVETIEDLAGLARTKPLMALALAALMFSLAGIPPLAGFVAKYYVFLAAIQAGLYGLAVIGVVASVVGAYYYLRVVKIMYFDEPAEAFDGMPGELKAVLAVSGLFTTFFFLAPTPLIAAAGAAARALF.

The next 14 membrane-spanning stretches (helical) occupy residues 10-30, 42-62, 77-97, 108-128, 129-149, 162-182, 202-222, 234-254, 268-288, 296-316, 323-343, 368-388, 392-412, and 445-465; these read AVLPELLLALSAVVLVLIGAI, LAIAALVAAGVLVMLQPAVTI, FMKVVALLGAAVSLIMSVDWL, AVLVVLASLGICILISAGDLI, ALYLGLELMSLSLYVVAAINR, FVLGALSSGMLLYGASLIYGF, LVFGIVFLFAGLCFKVSAVPF, PTPVTAFFATAPKVAAMAVFV, WQQIVTFVSIASMALGAFAAI, LLAYSSIGHMGFALVGLAAGT, VLLYMAIYVVMTLGSFTCVLA, ALALAALMFSLAGIPPLAGFV, YVFLAAIQAGLYGLAVIGVVA, and AVLAVSGLFTTFFFLAPTPLI.

The protein belongs to the complex I subunit 2 family. NDH-1 is composed of 14 different subunits. Subunits NuoA, H, J, K, L, M, N constitute the membrane sector of the complex.

Its subcellular location is the cell inner membrane. It carries out the reaction a quinone + NADH + 5 H(+)(in) = a quinol + NAD(+) + 4 H(+)(out). Its function is as follows. NDH-1 shuttles electrons from NADH, via FMN and iron-sulfur (Fe-S) centers, to quinones in the respiratory chain. The immediate electron acceptor for the enzyme in this species is believed to be ubiquinone. Couples the redox reaction to proton translocation (for every two electrons transferred, four hydrogen ions are translocated across the cytoplasmic membrane), and thus conserves the redox energy in a proton gradient. In Azorhizobium caulinodans (strain ATCC 43989 / DSM 5975 / JCM 20966 / LMG 6465 / NBRC 14845 / NCIMB 13405 / ORS 571), this protein is NADH-quinone oxidoreductase subunit N.